The chain runs to 74 residues: Antimicrobial peptide AcrAP2 (74 aa).

An N-terminal signal peptide occupies residues 1-22 (MEIKYLLTVFLVLLIVSDHCQA). Lys-40 bears the Lysine amide mark. Residues 46–74 (NLDGQIDRFRNFRKRDAELEELLSKLPIY) constitute a propeptide that is removed on maturation.

The protein belongs to the non-disulfide-bridged peptide (NDBP) superfamily. Short antimicrobial peptide (group 4) family. Expressed by the venom gland.

Its subcellular location is the secreted. The protein localises to the target cell membrane. Has antimicrobial activity against the Gram-positive bacteria S.aureus (MIC=8 uM) and the yeast C.albicans (MIC=16 uM). Causes hemolysis on horse erythrocytes (64 uM for 100% hemolysis). Minimum bactericidal concentrations have also been tested against S.aureus and is four-fold higher (MBC=32 uM). The chain is Antimicrobial peptide AcrAP2 from Androctonus crassicauda (Arabian fat-tailed scorpion).